Consider the following 1247-residue polypeptide: MGDEFPFHHLGYVCLNEIYKHLTLKEIFQLSFSSNQIKRSLGIASIPVKSIFVNFDSQYPKIKLIGESSQLEWVFGIPDGLEYTDVGVYKIGHFKFQCKTSGTAFYTEHYDLENAMLVVIRYMISIFKCSNSIITYLSIDLGVIEDSRAICENFVAFKKVERLSIFQTNYGVERNTLNFAQSFDWICDNLEIKNIHIGADVLEPKMVQKTNGEFDIKLCARRFEQVLTMDHIYLQHADWITSEDLLNLDVQTAMLIENNLTEQDLNAFIKQWLRSDSDKLWWLEVKGKMMFNREEVLKDLDVQDDAYRSLNTRWYVARRSRANPSGNGCARKKMGSLRPKLTELWPFKVYIIFGSILIVFGPAALNRMITLRRMDVETDRPSGSETGIFVSKSAVYPFGNKNEVVKVWWNIDKPENCLDWIGLFDNNDSSFYLDQKSLRQHISPVVFTLTSKNLLNASEVYFGLIDGMTGRLLAKSENVEICKSASLVVHEVKKPENINVYLNTNHGRIEIPKKRSFSRKNGSFRSSFEFDFDVEDLHISLVENSEKLNFDHFIASNQLQNNYIQSKSFSHSHVVEIVFSIEPKTSKKSAPDIMEIASSSQTPPESHWKTYLDAKKRKFYVNHVTKETRWTKPDTLNNNHIEPETPVHKRLSDRSASPRNSFITPRRTITVRSAGCPKSDLIQFFQRDEFKTALYENQDAMQIYNECSVVRHAIHRIQKDLDPPSKFENQPLFVRFVNLFADITQPLPSGWECITMNNRTVFLNHANKETSFYDPRIRRFETKTSRRGRSVPSRSSTAHKGKIDHALISKCEDLRKIAQDNFPQIAERISKKLMLIERFGGLAVASLANDLDITLALSMLDSNTEKLAGEGDNIKMFYEDMKKEKLGKGPSRLCWKVSRDRLLDDAFRIILNVDPFVLKKSRLHIRFEGELALDYGGLSREFFILLSRELFHPKNGYFEYEGNDYHLQLRPRGCETEKEKKWLILCGRVLALAVIHRCYIDVFFTNVFYKSLQKRPVTLMDFKESDAEFYKSMNWLLENDVVDLEMSFVYSSMVNGKLAEQELVPGGESQMVTEANKAEFIDLMCQKKAIRGVEKPLEILLTSFNQILNDNLLNSLESSDLKRILSGSLELDLNDWRTNTIYKGGYSDCHIVVEWFWEVIETMTNQERFDLLLFVTGSSSVPFEGFSALRGNEEISKFCIEKWGDATSFPRAHTCFNRLQLPSYNTKQQLKSKLQQAIVNGMSYSIE.

One can recognise a WW 1 domain in the interval Thr602–Thr635. A disordered region spans residues Pro633–Arg659. Residues Ile641–Asp653 show a composition bias toward basic and acidic residues. The WW 2 domain occupies Gln745–Ile777. Residues Asp914–Glu1247 form the HECT domain. Residue Cys1215 is the Glycyl thioester intermediate of the active site.

As to expression, expressed in the nervous system throughout the body. In the anterior ganglion, expression is limited to the two lateral outer labial neurons OLLL and OLLR.

The protein localises to the cytoplasm. The enzyme catalyses S-ubiquitinyl-[E2 ubiquitin-conjugating enzyme]-L-cysteine + [acceptor protein]-L-lysine = [E2 ubiquitin-conjugating enzyme]-L-cysteine + N(6)-ubiquitinyl-[acceptor protein]-L-lysine.. It functions in the pathway protein modification; protein ubiquitination. E3 ubiquitin-protein ligase. Functions in the OLL neurons in the anterior ganglion to inhibit avoidance to microbial pathogens such as P.aeruginosa although worms do display avoidance behavior, vacating a P.aeruginosa lawn within 24 hours. Likely to act by inhibiting the neuropeptide receptor npr-1. In Caenorhabditis elegans, this protein is E3 ubiquitin-protein ligase hecw-1.